We begin with the raw amino-acid sequence, 299 residues long: Phosphate import ATP-binding protein PstB 1 (299 aa).

A disordered region spans residues 1–51; it reads MTENEMTSNDSTEPTPTTETAASSPDPSGDPLIEQSIDVEGTDSTAAETGK. Low complexity predominate over residues 10–27; it reads DSTEPTPTTETAASSPDP. The region spanning 54-294 is the ABC transporter domain; the sequence is IESSDLNVFY…PESQRVEDYI (241 aa). Residue 86 to 93 coordinates ATP; it reads GPSGCGKS.

It belongs to the ABC transporter superfamily. Phosphate importer (TC 3.A.1.7) family. As to quaternary structure, the complex is composed of two ATP-binding proteins (PstB), two transmembrane proteins (PstC and PstA) and a solute-binding protein (PstS).

It is found in the cell membrane. The enzyme catalyses phosphate(out) + ATP + H2O = ADP + 2 phosphate(in) + H(+). Functionally, part of the ABC transporter complex PstSACB involved in phosphate import. Responsible for energy coupling to the transport system. The chain is Phosphate import ATP-binding protein PstB 1 from Haloarcula marismortui (strain ATCC 43049 / DSM 3752 / JCM 8966 / VKM B-1809) (Halobacterium marismortui).